The sequence spans 239 residues: Ribosomal RNA small subunit methyltransferase G (239 aa).

Residues G77, F82, 128-129 (AE), and R147 contribute to the S-adenosyl-L-methionine site. Residues 219–239 (RKTPKKYPRKPGTPNKLPIEK) are disordered.

This sequence belongs to the methyltransferase superfamily. RNA methyltransferase RsmG family.

Its subcellular location is the cytoplasm. In terms of biological role, specifically methylates the N7 position of guanine in position 535 of 16S rRNA. The chain is Ribosomal RNA small subunit methyltransferase G from Bacillus cytotoxicus (strain DSM 22905 / CIP 110041 / 391-98 / NVH 391-98).